Reading from the N-terminus, the 1714-residue chain is Latrophilin Cirl (1714 aa).

Residues 1-765 (MSSIDISGRY…LFTMFDGNMR (765 aa)) lie on the Extracellular side of the membrane. The SUEL-type lectin domain occupies 26-115 (ACEGKKLTIE…KYLEAHYQCI (90 aa)). Residue asparagine 143 is glycosylated (N-linked (GlcNAc...) asparagine). Residues 183–302 (PPHTVTHSTP…GSPASGNNSV (120 aa)) are disordered. Over residues 186–198 (TVTHSTPSSSTVP) the composition is skewed to low complexity. Over residues 244–262 (PSSKLPSAGNATAPSNTRI) the composition is skewed to polar residues. Asparagine 253 carries N-linked (GlcNAc...) asparagine glycosylation. 2 stretches are compositionally biased toward low complexity: residues 272–282 (DDGTLLTTKSS) and 290–301 (ASNGSPASGNNS). N-linked (GlcNAc...) asparagine glycans are attached at residues asparagine 299, asparagine 338, asparagine 395, asparagine 652, asparagine 701, and asparagine 728. A disordered region spans residues 373 to 397 (YDEYDDDPSSTTPAPSGGDCLHNSS). Residues 558 to 752 (RSVVQKVKNI…AILMDVVDEH (195 aa)) enclose the GAIN-B domain. 2 disulfide bridges follow: cysteine 707-cysteine 734 and cysteine 722-cysteine 736. Positions 707 to 752 (CVFWNYIDHAWSANGCSLESTNRTHSVCSCNHLTNFAILMDVVDEH) are GPS. The chain crosses the membrane as a helical span at residues 766 to 786 (VFIYISIAICVVFIVIALLTL). Residues 787–799 (KLFNGVFVKSART) lie on the Cytoplasmic side of the membrane. The chain crosses the membrane as a helical span at residues 800–820 (TIYTSIYVCLLAIELLFLLGI). At 821-826 (EQTETS) the chain is on the extracellular side. The helical transmembrane segment at 827-847 (IFCGFITVFLHCAILSGAAWF) threads the bilayer. The Cytoplasmic portion of the chain corresponds to 848-873 (CYEAFHSYYTLTSDELLVEVDQTPKV). The helical transmembrane segment at 874–894 (NWYYLLSYGLSVSVVAISVAI) threads the bilayer. At 895–911 (NPSTYTQNDYCVLMEAN) the chain is on the extracellular side. A helical transmembrane segment spans residues 912–932 (ILFYATFVAPVLIFFVAAIGY). At 933–966 (TFLSWIIMCRKSCTGLKTKEHTRLASVRFDIRCS) the chain is on the cytoplasmic side. A helical membrane pass occupies residues 967–987 (FVFLLLLSAVWCSAYFYLRGA). At 988-994 (KTDEDTT) the chain is on the extracellular side. The chain crosses the membrane as a helical span at residues 995 to 1015 (TIYGYCFICFNTLLGLYIFVF). At 1016–1714 (HCIQNEKIRR…VRCYLEPLAK (699 aa)) the chain is on the cytoplasmic side. Phosphoserine occurs at positions 1155, 1245, and 1252. 5 disordered regions span residues 1229 to 1253 (PNSQHGKKKRGGAVPASPSGSLHSR), 1268 to 1287 (KTKQGQPSGYPHYAEALDPP), 1293 to 1354 (AFYQ…PPPH), 1447 to 1536 (GGGS…DERM), and 1551 to 1694 (FQRQ…QQRH). Low complexity predominate over residues 1296-1315 (QQQQQMRRQQQQQQQQQQQQ). 2 positions are modified to phosphoserine: serine 1317 and serine 1318. Composition is skewed to low complexity over residues 1330-1348 (LHLQHQQQHQRRVGGQQQL) and 1453-1478 (GGSVSSRSQQQQLQKQQKQQQQQQQR). Acidic residues-rich tracts occupy residues 1486–1500 (DDDDDDDEEEDDEAT) and 1510–1523 (CDDDDEEEDSDLDD). Residues 1524-1536 (DAHKLPPQSDERM) are compositionally biased toward basic and acidic residues. Over residues 1565 to 1580 (GALPPGVAPGAGSAGP) the composition is skewed to low complexity. Positions 1644–1659 (QTPAQKRQQLQKLSPQ) are enriched in polar residues. The segment covering 1660 to 1675 (STTSSSSHTSHSNLQP) has biased composition (low complexity). The span at 1679 to 1693 (PLTHQHPHPPQHQQR) shows a compositional bias: basic residues.

This sequence belongs to the G-protein coupled receptor 2 family. LN-TM7 subfamily. As to quaternary structure, forms a heterodimer, consisting of a large extracellular region non-covalently linked to a seven-transmembrane moiety. Proteolytically cleaved into 2 subunits, an extracellular subunit and a seven-transmembrane subunit.

The protein resides in the cell membrane. In Drosophila ananassae (Fruit fly), this protein is Latrophilin Cirl.